A 455-amino-acid polypeptide reads, in one-letter code: MTHSQDLFDRARDVIPGGVNSPVRAFGSVGGTPRMMVKAAGPYVTDADGVEYVDLVNSWGPAILGHARPEVVQAVQDAAALGLGFGATTPAETELAELVTDRVRVAGVDGSPDRRPIEKLRLVSTGTEATMTAIRLARGFTGRDLLVKFAGHYHGHSDSLLAEAGSGVATLALPGSAGIPEAIAAQTIVVPYNDLDAVRAVIAEHGPRIAAVITEAAAANMGVVPPLPGFTAELARIAHDNGSLLISDEVLTGFRVHPAGYWGLDNAGLAADHPDAWTPDLVTYGKVIGGGLPVAALGGRADVMDHLAPLGPVYQAGTLSGNPVAVAAGLTTLRLADAGVYRALDIAADILIYAVELAFDRAGLAYSVQRAGSLFSFTFGTPPEHGITDYATVQAQETWRYPAFFHSMLDQGVSLPPSVFEAWFVSAAMDEASLDRVIRALPAAARAAAAATPPA.

N6-(pyridoxal phosphate)lysine is present on Lys-286.

It belongs to the class-III pyridoxal-phosphate-dependent aminotransferase family. HemL subfamily. As to quaternary structure, homodimer. Pyridoxal 5'-phosphate is required as a cofactor.

The protein resides in the cytoplasm. The enzyme catalyses (S)-4-amino-5-oxopentanoate = 5-aminolevulinate. The protein operates within porphyrin-containing compound metabolism; protoporphyrin-IX biosynthesis; 5-aminolevulinate from L-glutamyl-tRNA(Glu): step 2/2. In Clavibacter michiganensis subsp. michiganensis (strain NCPPB 382), this protein is Glutamate-1-semialdehyde 2,1-aminomutase.